A 1117-amino-acid chain; its full sequence is Isoleucine--tRNA ligase (1117 aa).

The 'HIGH' region signature appears at 64–74 (PFANGLPHYGH). The short motif at 647-651 (KLSKR) is the 'KMSKS' region element. Lys-650 lines the ATP pocket.

The protein belongs to the class-I aminoacyl-tRNA synthetase family. IleS type 2 subfamily. In terms of assembly, monomer. Requires Zn(2+) as cofactor.

The protein localises to the cytoplasm. It carries out the reaction tRNA(Ile) + L-isoleucine + ATP = L-isoleucyl-tRNA(Ile) + AMP + diphosphate. Its function is as follows. Catalyzes the attachment of isoleucine to tRNA(Ile). As IleRS can inadvertently accommodate and process structurally similar amino acids such as valine, to avoid such errors it has two additional distinct tRNA(Ile)-dependent editing activities. One activity is designated as 'pretransfer' editing and involves the hydrolysis of activated Val-AMP. The other activity is designated 'posttransfer' editing and involves deacylation of mischarged Val-tRNA(Ile). This is Isoleucine--tRNA ligase from Ehrlichia ruminantium (strain Welgevonden).